We begin with the raw amino-acid sequence, 541 residues long: Chloride channel CLIC-like protein 1 (541 aa).

Positions 1–18 are cleaved as a signal peptide; sequence MLCSLLLCGCLLLITGYA. At 19–184 the chain is on the lumenal side; sequence HDDDWIDPTD…EDYFGVDPYN (166 aa). The helical transmembrane segment at 185-205 threads the bilayer; it reads VFMVLLCLLCIVALVATELWT. Residues 206-217 are Cytoplasmic-facing; the sequence is YVRWHTQLKRVC. A helical membrane pass occupies residues 218 to 238; the sequence is IISFLVSLGWNWIYLYKVAFA. Topologically, residues 239–329 are lumenal; sequence QHQANVAKMA…GEFIKALMKE (91 aa). A helical membrane pass occupies residues 330–350; sequence IPVLLQIPVLVILALAVLGFC. Residues 351–541 are Cytoplasmic-facing; sequence YGAGQSVPML…GTDPVSSPCG (191 aa). Positions 362-381 are disordered; sequence HFRGPEREPPRALEPDDRRR. Over residues 364–381 the composition is skewed to basic and acidic residues; the sequence is RGPEREPPRALEPDDRRR. 2 positions are modified to phosphoserine: Ser-434 and Ser-438. Position 482 is a phosphothreonine (Thr-482). Ser-504 carries the post-translational modification Phosphoserine. Positions 511–522 are enriched in basic and acidic residues; that stretch reads QLKTDSECRPHS. The segment at 511–541 is disordered; sequence QLKTDSECRPHSTEAAAAAARGTDPVSSPCG.

It belongs to the chloride channel MCLC family. Homomultimers. Interacts with mitochondrial protein PIGBOS1 (via C-terminus); the interaction occurs at the mitochondria-associated endoplasmic reticulum (ER) membrane, a zone of contact between the ER and mitochondrial membranes, but does not appear to play a role in ER-mitochondria tethering and is not affected by ER stress. Interacts with CALR. As to expression, expressed in testis (spermatocytes), liver and lung (at protein level). Expressed in spleen, liver, testis, kidney, heart, brain and lung.

It is found in the endoplasmic reticulum membrane. The catalysed reaction is chloride(in) = chloride(out). The enzyme catalyses bromide(in) = bromide(out). It carries out the reaction nitrate(in) = nitrate(out). It catalyses the reaction fluoride(in) = fluoride(out). Its function is as follows. Anion-selective channel with Ca(2+)-dependent and voltage-independent gating. Permeable to small monovalent anions with selectivity for bromide &gt; chloride &gt; nitrate &gt; fluoride. Operates in the endoplasmic reticulum (ER) membrane where it mediates chloride efflux to compensate for the loss of positive charges from the ER lumen upon Ca(2+) release. Contributes to the maintenance of ER Ca(2+) pools and activation of unfolded protein response to prevent accumulation of misfolded proteins in the ER lumen. Particularly involved in ER homeostasis mechanisms underlying motor neurons and retinal photoreceptors survival. The polypeptide is Chloride channel CLIC-like protein 1 (Rattus norvegicus (Rat)).